The following is a 421-amino-acid chain: Zinc finger protein 57 (421 aa).

Residues 15 to 88 form the KRAB domain; sequence VSYEDVAVSF…SCTGVFKGGP (74 aa). Residues 90–113 form a C2H2-type 1; degenerate zinc finger; sequence FFCLTCGKCFKKNTFLFNHQFPVR. 2 consecutive C2H2-type zinc fingers follow at residues 140-162 and 168-190; these read FFCNFCGKTYRDASGLSRHRRAH and RSCPECGKCFRDQSEVNRHLKVH. A disordered region spans residues 191 to 221; that stretch reads QNKPAASNQAGNQASNQRLKSRVPPTTPRSQ. Over residues 195 to 207 the composition is skewed to low complexity; it reads AASNQAGNQASNQ. The segment at 264–286 adopts a C2H2-type 4 zinc-finger fold; sequence ISCPYCHITFTMRTCLLTHLKIH. The segment at 313–332 adopts a C2H2-type 5; degenerate zinc-finger fold; it reads YTCPVCDSSFRGKESLLDHL. The segment at 371–421 is disordered; sequence GKRMESRRRRRKRACTENPETEGLSGKGRVAPWEMEGATSPESPVTEEDSD.

Belongs to the krueppel C2H2-type zinc-finger protein family. In terms of tissue distribution, expressed in oocytes and in a subset of adult tissues. Expressed at high levels in testis, and at low levels in cerebellum. Present in sciatic nerve and spinal cord (at protein level).

The protein resides in the nucleus. Its function is as follows. Transcription regulator required to maintain maternal and paternal gene imprinting, a process by which gene expression is restricted in a parent of origin-specific manner by epigenetic modification of genomic DNA and chromatin, including DNA methylation. Acts by controlling DNA methylation during the earliest multicellular stages of development at multiple imprinting control regions (ICRs). Acts together with ZNF445, but ZFP57 plays the predominant role in imprinting maintenance. In contrast, in humans, ZNF445 seems to be the major factor early embryonic imprinting maintenance. Required for the establishment of maternal methylation imprints at SNRPN locus. Acts as a transcriptional repressor in Schwann cells. Binds to a 5'-TGCCGC-3' consensus sequence and recognizes the methylated CpG within this element. This Mus musculus (Mouse) protein is Zinc finger protein 57 (Zfp57).